We begin with the raw amino-acid sequence, 438 residues long: 3-phosphoshikimate 1-carboxyvinyltransferase (438 aa).

Residues K28, S29, and R33 each coordinate 3-phosphoshikimate. K28 is a binding site for phosphoenolpyruvate. Residues G97 and R125 each contribute to the phosphoenolpyruvate site. Residues S168, S169, Q170, E316, and H343 each coordinate 3-phosphoshikimate. Q170 contacts phosphoenolpyruvate. E316 (proton acceptor) is an active-site residue. The phosphoenolpyruvate site is built by R347, R388, and K413.

It belongs to the EPSP synthase family. Monomer.

The protein localises to the cytoplasm. It catalyses the reaction 3-phosphoshikimate + phosphoenolpyruvate = 5-O-(1-carboxyvinyl)-3-phosphoshikimate + phosphate. Its pathway is metabolic intermediate biosynthesis; chorismate biosynthesis; chorismate from D-erythrose 4-phosphate and phosphoenolpyruvate: step 6/7. Functionally, catalyzes the transfer of the enolpyruvyl moiety of phosphoenolpyruvate (PEP) to the 5-hydroxyl of shikimate-3-phosphate (S3P) to produce enolpyruvyl shikimate-3-phosphate and inorganic phosphate. The protein is 3-phosphoshikimate 1-carboxyvinyltransferase of Rhodococcus jostii (strain RHA1).